A 398-amino-acid chain; its full sequence is Phosphoglycerate kinase (398 aa).

Substrate is bound by residues 21 to 23 (DFN), R36, 59 to 62 (HFGR), R117, and R150. Residues K200, E321, and 351 to 354 (GGDS) contribute to the ATP site.

It belongs to the phosphoglycerate kinase family. As to quaternary structure, monomer.

It localises to the cytoplasm. The catalysed reaction is (2R)-3-phosphoglycerate + ATP = (2R)-3-phospho-glyceroyl phosphate + ADP. Its pathway is carbohydrate degradation; glycolysis; pyruvate from D-glyceraldehyde 3-phosphate: step 2/5. This chain is Phosphoglycerate kinase, found in Wolbachia sp. subsp. Drosophila simulans (strain wRi).